A 520-amino-acid chain; its full sequence is Signal peptide peptidase-like 2A (520 aa).

The N-terminal stretch at 1 to 25 (MGPQRRLSPAGAALLWGFLLQLTAA) is a signal peptide. The Lumenal segment spans residues 26–172 (QEAILHASGN…PSWPNFDYTM (147 aa)). 6 N-linked (GlcNAc...) asparagine glycosylation sites follow: asparagine 58, asparagine 66, asparagine 74, asparagine 116, asparagine 126, and asparagine 149. The region spanning 63–151 (SLMNLTSTPL…YKDFRDMNQT (89 aa)) is the PA domain. Asparagine 155 is a glycosylation site (N-linked (GlcNAc...) (complex) asparagine). A helical membrane pass occupies residues 173 to 193 (VVIFVIAVFTVALGGYWSGLV). At 194–220 (ELENLKAVTTEDREMRKKKEEYLTFSP) the chain is on the cytoplasmic side. The chain crosses the membrane as a helical span at residues 221–241 (LTVVIFVVICCVMMVLLYFFY). Residues 242 to 247 (KWLVYV) are Lumenal-facing. A helical membrane pass occupies residues 248–268 (MIAIFCIASAMSLYNCLAALI). At 269-285 (HKIPYGQCTIACRGKNM) the chain is on the cytoplasmic side. A helical membrane pass occupies residues 286 to 306 (EVRLIFLSGLCIAVAVVWAVF). Topologically, residues 307–311 (RNEDR) are lumenal. Residues 312–332 (WAWILQDILGIAFCLNLIKTL) traverse the membrane as a helical segment. At 333-340 (KLPNFKSC) the chain is on the cytoplasmic side. The helical transmembrane segment at 341 to 361 (VILLGLLLLYDVFFVFITPFI) threads the bilayer. Aspartate 351 is an active-site residue. The Lumenal portion of the chain corresponds to 362-399 (TKNGESIMVELAAGPFGNNEKLPVVIRVPKLIYFSVMS). The helical transmembrane segment at 400-420 (VCLMPVSILGFGDIIVPGLLI) threads the bilayer. Residue aspartate 412 is part of the active site. Residues 421–437 (AYCRRFDVQTGSSYIYY) lie on the Cytoplasmic side of the membrane. A helical transmembrane segment spans residues 438–458 (VSSTVAYAIGMILTFVVLVLM). Over 459–460 (KK) the chain is Lumenal. Residues 461–481 (GQPALLYLVPCTLITASVVAW) form a helical membrane-spanning segment. The PAL signature appears at 463–465 (PAL). At 482 to 520 (RRKEMKKFWKGNSYQMMDHLDCATNEENPVISGEQIVQQ) the chain is on the cytoplasmic side. Positions 495–498 (YQMM) match the YXXo lysosomal targeting motif motif.

Belongs to the peptidase A22B family. In terms of assembly, interacts with ITM2B. Glycosylated. Ubiquitous.

The protein resides in the late endosome membrane. It localises to the lysosome membrane. It is found in the membrane. Functionally, intramembrane-cleaving aspartic protease (I-CLiP) that cleaves type II membrane signal peptides in the hydrophobic plane of the membrane. Functions in FASLG, ITM2B and TNF processing. Catalyzes the intramembrane cleavage of the anchored fragment of shed TNF-alpha (TNF), which promotes the release of the intracellular domain (ICD) for signaling to the nucleus. Also responsible for the intramembrane cleavage of Fas antigen ligand FASLG, which promotes the release of the intracellular FasL domain (FasL ICD). Essential for degradation of the invariant chain CD74 that plays a central role in the function of antigen-presenting cells in the immune system. Plays a role in the regulation of innate and adaptive immunity. Catalyzes the intramembrane cleavage of the simian foamy virus envelope glycoprotein gp130 independently of prior ectodomain shedding by furin or furin-like proprotein convertase (PC)-mediated cleavage proteolysis. The protein is Signal peptide peptidase-like 2A of Homo sapiens (Human).